Consider the following 413-residue polypeptide: SET and MYND domain-containing protein DDB_G0273591 (413 aa).

An SET domain is found at 6-311; that stretch reads DGLKLSNSEL…KGDQINISYL (306 aa). An MYND-type zinc finger spans residues 51 to 95; the sequence is CYNCIKLIKSPSPQQVPRCFGCNEVWYCSEKCKQDNQAKHQHYEC. Positions 205–232 are disordered; it reads DNNNNNNNNNNNNNNNNNNNNNNNNNNN. Positions 216 to 243 form a coiled coil; sequence NNNNNNNNNNNNNNNNNNNIEELIKLIR.

It belongs to the class V-like SAM-binding methyltransferase superfamily.

Its function is as follows. Probable methyltransferase. The protein is SET and MYND domain-containing protein DDB_G0273591 of Dictyostelium discoideum (Social amoeba).